The chain runs to 977 residues: Fc receptor-like protein 5 (977 aa).

The N-terminal stretch at 1-15 (MLLWVILLVLAPVSG) is a signal peptide. Over 16–851 (QFARTPRPII…ANRSGPFATG (836 aa)) the chain is Extracellular. 8 Ig-like C2-type domains span residues 23-101 (PIIF…LDFS), 188-271 (PFTR…SVIS), 287-374 (PVLT…LSVT), 380-463 (PVLN…KAVS), 473-556 (PVLT…EVVS), 566-651 (PILT…ISLS), 659-744 (PILT…VTLK), and 752-834 (PVLT…ETVT). Disulfide bonds link C44–C85, C211–C260, and C308–C355. N-linked (GlcNAc...) asparagine glycosylation occurs at N383. 5 disulfide bridges follow: C401–C448, C494–C541, C587–C634, C680–C727, and C773–C819. Residues 852–872 (VAGGLLSIAGLAAGALLLYCW) form a helical membrane-spanning segment. The Cytoplasmic portion of the chain corresponds to 873 to 977 (LSRKAGRKPA…LFLASSAPHR (105 aa)). The interval 879 to 898 (RKPASDPARSPSDSDSQEPT) is disordered. Residues 883–892 (SDPARSPSDS) show a composition bias toward low complexity. 4 short sequence motifs (ITIM motif) span residues 897–902 (PTYHNV), 910–915 (PVYTNA), 922–927 (VVYSEV), and 952–957 (IIYSEV).

As to quaternary structure, interacts with CR2. Interacts with CD19. In terms of tissue distribution, expressed in marginal zone B-cells, immunoblasts, tonsillar germinal center centrocytes and in the intraepithelial and interfollicular regions of the tonsil. Expressed in many lymphoma cell lines and on hairy cell leukemia cells. Isoform 1, isoform 3, isoform 4 and isoform 5 are detected in lymph node, spleen, bone marrow, and small intestine with preponderance of isoform 3. Expressed in mature and memory B-cells and down-regulated in germinal center cells (at protein level).

Its subcellular location is the cell membrane. Its function is as follows. Plays an important role in B-cell response to antigen that acts both as a negative or positive coreceptor. Inhibits B-cell receptor (BCR) signaling in the absence of CR2 stimulation but engagement with CR2 and the BCR lead to a superior calcium response compared to CR2 and BCR costimulation. May be involved in B-cell development and differentiation in peripheral lymphoid organs and may be useful markers of B-cell stages. May have an immunoregulatory role in marginal zone B-cells. May play a role in fertilization. The protein is Fc receptor-like protein 5 (FCRL5) of Homo sapiens (Human).